The sequence spans 98 residues: Keratin, high sulfur matrix protein, IIIB4 (98 aa).

Alanine 1 carries the N-acetylalanine modification.

It belongs to the KRTAP type 3 family. As to quaternary structure, interacts with wool keratins. Wool.

Its function is as follows. In the wool cortex, wool keratin intermediate filaments are embedded in an interfilamentous matrix, consisting of hair keratin-associated proteins (KRTAP), which are essential for the formation of a rigid and resistant wool shaft through their extensive disulfide bond cross-linking with abundant cysteine residues of wool keratins. The matrix proteins include the high-sulfur and high-glycine-tyrosine keratins. The protein is Keratin, high sulfur matrix protein, IIIB4 of Ovis aries (Sheep).